The primary structure comprises 119 residues: uncharacterized protein (119 aa).

This is an uncharacterized protein from Bos taurus (Bovine).